The following is a 175-amino-acid chain: NADH-quinone oxidoreductase subunit I (175 aa).

4Fe-4S ferredoxin-type domains follow at residues 69-98 (KRDE…IEAA) and 115-144 (KKFE…LDGP). Residues cysteine 78, cysteine 81, cysteine 84, cysteine 88, cysteine 124, cysteine 127, cysteine 130, and cysteine 134 each coordinate [4Fe-4S] cluster.

Belongs to the complex I 23 kDa subunit family. In terms of assembly, NDH-1 is composed of 14 different subunits. Subunits NuoA, H, J, K, L, M, N constitute the membrane sector of the complex. [4Fe-4S] cluster is required as a cofactor.

It localises to the cell inner membrane. It catalyses the reaction a quinone + NADH + 5 H(+)(in) = a quinol + NAD(+) + 4 H(+)(out). NDH-1 shuttles electrons from NADH, via FMN and iron-sulfur (Fe-S) centers, to quinones in the respiratory chain. The immediate electron acceptor for the enzyme in this species is believed to be ubiquinone. Couples the redox reaction to proton translocation (for every two electrons transferred, four hydrogen ions are translocated across the cytoplasmic membrane), and thus conserves the redox energy in a proton gradient. This Leptospira interrogans serogroup Icterohaemorrhagiae serovar Lai (strain 56601) protein is NADH-quinone oxidoreductase subunit I.